We begin with the raw amino-acid sequence, 189 residues long: Pyridoxal 5'-phosphate synthase subunit PdxT (189 aa).

47-49 provides a ligand contact to L-glutamine; the sequence is GES. Catalysis depends on cysteine 79, which acts as the Nucleophile. L-glutamine-binding positions include arginine 105 and 132-133; that span reads IR. Active-site charge relay system residues include histidine 168 and glutamate 170.

This sequence belongs to the glutaminase PdxT/SNO family. In terms of assembly, in the presence of PdxS, forms a dodecamer of heterodimers. Only shows activity in the heterodimer.

It carries out the reaction aldehydo-D-ribose 5-phosphate + D-glyceraldehyde 3-phosphate + L-glutamine = pyridoxal 5'-phosphate + L-glutamate + phosphate + 3 H2O + H(+). The enzyme catalyses L-glutamine + H2O = L-glutamate + NH4(+). It functions in the pathway cofactor biosynthesis; pyridoxal 5'-phosphate biosynthesis. Its function is as follows. Catalyzes the hydrolysis of glutamine to glutamate and ammonia as part of the biosynthesis of pyridoxal 5'-phosphate. The resulting ammonia molecule is channeled to the active site of PdxS. The polypeptide is Pyridoxal 5'-phosphate synthase subunit PdxT (Methanocorpusculum labreanum (strain ATCC 43576 / DSM 4855 / Z)).